A 254-amino-acid chain; its full sequence is Myeloblastin (254 aa).

Positions 1–27 (MSGSYPSPKGIHPFLLLALVVGGAVQA) are cleaved as a signal peptide. The propeptide occupies 28 to 29 (SK). The 221-residue stretch at 30–250 (IVGGHEARPH…YVDWIQNVLR (221 aa)) folds into the Peptidase S1 domain. The cysteines at positions 58 and 74 are disulfide-linked. Residues histidine 73 and aspartate 120 each act as charge relay system in the active site. Residues asparagine 127 and asparagine 176 are each glycosylated (N-linked (GlcNAc...) asparagine). Cystine bridges form between cysteine 154/cysteine 211, cysteine 184/cysteine 190, and cysteine 201/cysteine 226. The active-site Charge relay system is serine 205. A propeptide spanning residues 251–254 (GAEP) is cleaved from the precursor.

The protein belongs to the peptidase S1 family. Elastase subfamily. May form dimers. Interacts with CD177; the interaction tethers PRTN3 to the cell surface; the interaction is direct. Interacts with SERPINB1. Interacts with ADGRG3.

It is found in the lysosome. The protein localises to the secreted. Its subcellular location is the cell membrane. It localises to the membrane raft. The catalysed reaction is Hydrolysis of proteins, including elastin, by preferential cleavage: -Ala-|-Xaa- &gt; -Val-|-Xaa-.. Serine protease that degrades elastin, fibronectin, laminin, vitronectin, and collagen types I, III, and IV (in vitro). By cleaving and activating receptor F2RL1/PAR-2, enhances endothelial cell barrier function and thus vascular integrity during neutrophil transendothelial migration. May play a role in neutrophil transendothelial migration, probably when associated with CD177. Triggers inflammatory processes in neutrophils by interacting with ADGRG3 upstream of F2RL1/PAR2 activation. This is Myeloblastin (Prtn3) from Mus musculus (Mouse).